Here is a 257-residue protein sequence, read N- to C-terminus: Neuroendocrine secretory protein 55 (257 aa).

An N-terminal signal peptide occupies residues M1–A46. The tract at residues S61 to H257 is disordered. Residues A70 to S82 show a composition bias toward low complexity. Residues E86–C103 show a composition bias toward basic and acidic residues. Over residues L104 to P139 the composition is skewed to acidic residues. The segment covering E200–R211 has biased composition (basic and acidic residues). Positions P227–R237 are enriched in basic residues.

Belongs to the NESP55 family. Binds keratan sulfate chains. Post-translationally, may be proteolytically processed to give rise to a number of active peptides.

Its subcellular location is the cytoplasmic vesicle. It is found in the secretory vesicle. It localises to the secreted. This Mus musculus (Mouse) protein is Neuroendocrine secretory protein 55.